Here is a 409-residue protein sequence, read N- to C-terminus: tRNA-specific 2-thiouridylase MnmA (409 aa).

Residues G40–S47 and L66 contribute to the ATP site. The active-site Nucleophile is the C127. The cysteines at positions 127 and 237 are disulfide-linked. G152 contributes to the ATP binding site. An interaction with tRNA region spans residues K187–Q189. C237 (cysteine persulfide intermediate) is an active-site residue. The interaction with tRNA stretch occupies residues R342–Y343.

The protein belongs to the MnmA/TRMU family.

It localises to the cytoplasm. It carries out the reaction S-sulfanyl-L-cysteinyl-[protein] + uridine(34) in tRNA + AH2 + ATP = 2-thiouridine(34) in tRNA + L-cysteinyl-[protein] + A + AMP + diphosphate + H(+). Catalyzes the 2-thiolation of uridine at the wobble position (U34) of tRNA, leading to the formation of s(2)U34. The protein is tRNA-specific 2-thiouridylase MnmA of Prochlorococcus marinus (strain MIT 9313).